Reading from the N-terminus, the 320-residue chain is Iminosuccinate reductase (320 aa).

Lys67 (proton donor/acceptor) is an active-site residue. NAD(+) is bound by residues Arg110, 137-138 (HQ), Asn159, Ser199, 219-222 (MGTD), Lys226, and Gly291.

This sequence belongs to the ornithine cyclodeaminase/mu-crystallin family. BhcD subfamily.

The enzyme catalyses L-aspartate + NAD(+) = iminosuccinate + NADH + H(+). Imine reductase that catalyzes the NADH-dependent reduction of iminosuccinate to L-aspartate. Is essential for the growth of P.denitrificans in the presence of glycolate and glyoxylate since it functions in glyoxylate assimilation via the beta-hydroxyaspartate cycle (BHAC). Thereby BhcD regenerates the amino group donor for the first step of the BHAC. The protein is Iminosuccinate reductase of Paracoccus denitrificans (strain Pd 1222).